The following is a 1953-amino-acid chain: MGVKKKKEMQVAVLTICHQDLETLKSFADAEGKNLASLLLRCVQLTDGVSQIHYVKQIVPLLEKVGKNGVCDPTIQSCLDILAGIYLSLSLKNPLKKVLASSLNSLPDFFLPEAVHRFTSRLQEELNTTDLYSYRKVIDNISSCMENFNLGRAGVNNLLKNVLHFLQKSLIEIVEENRKCAGNHIIQTQLMNDLLVGIRVSMTLVQKVQDFQGNLWKASNSPIWQNMCGLLSIFTKFLSDDDLLQTVQSTSGLAITLFIKTMFHPSEKIPHLISSVLLRSVDCTSVPEWFMNSCRSLCCGNVSGSAVLFLCQGTLAMLDWQNGSMGRSGEALLLDTAHVLFTLSSQIKEPTLEMFLSRIMASWTNSAIQVLESSSPSLRDSLNGNSSIVGRLLEYVYTHWEHPLDALRHQTKIMFKNLLQMHRLTVEGAVLVPDPFFVKLTESLLRLEWHIKGKYMCLGCLVECIGIEHILAIDKTIPSQILEVMGDQSLVPYASDLLETMFKNHKSHLKSQTAESSWIDQWHETWVSPLLFILCEGNLDQKSYVIDYYLPKLLSYSPESLQYMVKILQTSIDAKTGQEQSFPSLGSCNSRGALGALMACLRIARAHGHLQSATDTWENLVSGARIKQGLIHQHCQVRIDTLGLLCESNRSTEIVSMEEMQWIQFFITYNLNSQSPGVRQQICSLLKKLFCRIQESSQVLYKLEQNKSKHEPEKELTKQHPSVSLQQYKNFMSSICNSLFEALFPGSSYSTRFSALTILGSIAEVFHVPEGRIYTVYQLNHDIDVGRFQALMECFTSTFEDVKMLAFDLLMKLSKTAVHFQDSEKLQGLFQAALALSTSTKPYDCVTASYLLNFLIWQDALPSSLSVYLTQQVARGDGDRPASVVERNTLMVIKCLMENLEEEVYQAENSLLQAAASFPMYGRVHCITGALQKLSLNSLQLVSEWRPVVEKLLLMSYRLSTVVSPVIQSSSPEGLIPMDTDSESASRLQMILNEIQPRDTNDYFNQAKILKEHDSFDMKDLNASVVNIDISTEIKGKEVKTCDVTAQMVLVCCWRSMKEVALLLGTLCQLLPMQPVPESSDGLLTVEQVKEIGDYFKQHLLQSRHRGAFELAYTGFVKLTEVLNRCPNVSLQKLPEQWLWSVLEEIKCSDPSSKLCATRRSAGIPFYIQALLASEPKKGKMDLLKITMKELISLAGPTDDLQSTVPQVHALNILRALFRDTRLGENIIPYVADGAKAAILGFTSPVWAVRNSSTLLFSALITRIFGVKRAKDELSKTNRMTGREFFSRFPELYPFLLKQLETVANAVDSDMGEPNRHPSMFLLLLVLERLYPSPMDGTSSALSMGPFVPFIMRCGHSPVYHSREMAARALVPFVMIDHIPNTIRTLLATLPSCTDQCFRQNRIHGTLLQVFHLLQAYSDSKHRTNSDFQHELTDITVCTKAKLWLAKRQNPCLVTRAVYIDILFLLTCCLNKSVKDNQPVLESLGLWEEVRGIISGSELITGFPCAFKAPGLPQYLESLTRLTIAAVWAAAAKSGERERDVPISFSQLLESAFPEVRSLTLEALLEKFLSAASGLGENGLPPLLCNMEEKFLLLAMKENHPECFCKILKILHCMDPGEWLPQTEHCVHLTPKEFLIWTMDVASNERSEIQSVALRLASKVISHHMQTCVENRELIAAELKQWVQLVILSCEDHLPTESRLAVVEVLTSTAPLFLTNPHPILELQDTLALWKCVLTLLQSEEQAVRDAATETVTTAMSQENTCQSTEFAFCQVDASIALALALAVLCDLLQQWNQLASGLPILLRWLLGDSDDLVVCVESLHQVEEDYLFEKAEVNFWAETLIFVKYLCKHLFCLLSKSGWRLPSPEMLCHLQRMVSEQCRLLSQLFRELPPAAEFVKTVEFTRLRIQEERTLACLKLLAFLEGKEGEDTLVLSVWDSSAEARQLTLPRTEAAC.

A coiled-coil region spans residues 888–918; it reads NTLMVIKCLMENLEEEVYQAENSLLQAAASF. A phosphoserine mark is found at Ser1015, Ser1024, and Ser1161.

It belongs to the THADA family.

Its function is as follows. Together with methyltransferase FTSJ1, methylates the 2'-O-ribose of nucleotides at position 32 of the anticodon loop of substrate tRNAs. In Chlorocebus aethiops (Green monkey), this protein is tRNA (32-2'-O)-methyltransferase regulator THADA (THADA).